We begin with the raw amino-acid sequence, 390 residues long: Protein dimmed (390 aa).

Residues 24–163 form a disordered region; sequence HNNNNYNTDG…RNMRRLESNE (140 aa). Polar residues-rich tracts occupy residues 29-44 and 55-64; these read YNTDGHNGLSSESAEG and RTSQLSNNTY. A glycan (N-linked (GlcNAc...) asparagine) is linked at Asn-61. Low complexity predominate over residues 69–78; sequence TDSSSQSDDT. Positions 79 to 90 are enriched in gly residues; the sequence is SGGGGSSNGGGS. The span at 122–141 shows a compositional bias: low complexity; it reads PSTIAPNSTSSNSSNANGNA. 3 N-linked (GlcNAc...) asparagine glycosylation sites follow: Asn-128, Asn-133, and Asn-140. Positions 151-163 are enriched in basic and acidic residues; it reads AKERNMRRLESNE. The bHLH domain maps to 156–208; that stretch reads MRRLESNERERMRMHSLNDAFQSLREVIPHVEMERRLSKIETLTLAKNYIINL. Asn-207 and Asn-237 each carry an N-linked (GlcNAc...) asparagine glycan. The interval 312-339 is disordered; it reads QQQQASHLPHHQQAMHGHGHLGASIQSQ. Asn-347 carries N-linked (GlcNAc...) asparagine glycosylation.

As to quaternary structure, forms homodimers via the bHLH domain. These dimers bind the core E-box sequence. Detected in the developing nervous system in the bilateral domains in the cephalic region that later on forms part of the ring gland. Concomitantly expressed in the larval central nervous system (CNS), including the dorsal chain neurons as well as several bilateral clusters of neurons: large, midline protocerebral brain cells (MC), lateral protocerebral brain cells (LC), ventral subesophageal neurons (SE) and lateral abdominal neurons, and the transverse nerves. Outside the CNS, detected in at least three classes of endocrine cells: intrinsic cells of the corpora cardiaca, midgut cells, the Inka cells, lateral Bipolar neurons associated with the segmental transverse nerve, and several peptidergic cells of the enteric nervous system. Expressed only in central and peripheral neuroendocrine secretory cells and neurosecretory neurons but not in sensory or motor neurons.

The protein localises to the cytoplasm. Transcription factor that regulates neurosecretory (NS) cell function and neuroendocrine cell fate. Acts as a master regulator of common NS functions such as Phm expression and neuropeptide production. Plays a role as a regulator of peptide-containing large dense-core vesicle (LDCV) production and peptidergic cell differentiation. Controls transcription of FMRFamide in Tv neuronal cells and Fur1 in Ap-let cells (Tvb and dorsal apterous cells). Also required for up-regulation of Phm in Tv and Ap-let cells, and expression of three neuropeptide genes, Ms, FMRFamide and Lk. Influences both regulated and constitutive secretory activity in neuroendocrine cells at embryonic and postembryonic level. Loss of function studies show reduced cellular levels of various neuropeptides and neuropeptide biosynthetic enzymes. In Drosophila melanogaster (Fruit fly), this protein is Protein dimmed (dimm).